The chain runs to 763 residues: MTLLNYLHCNRSKSFLFQRFYSPYRIAHKLFDGSSQRNATTSINHSISESLRRNSPARALSIFKENLQLGYFGRHMDEVTLCLALKACRGDLKRGCQIHGFSTTSGFTSFVCVSNAVMGMYRKAGRFDNALCIFENLVDPDVVSWNTILSGFDDNQIALNFVVRMKSAGVVFDAFTYSTALSFCVGSEGFLLGLQLQSTVVKTGLESDLVVGNSFITMYSRSGSFRGARRVFDEMSFKDMISWNSLLSGLSQEGTFGFEAVVIFRDMMREGVELDHVSFTSVITTCCHETDLKLARQIHGLCIKRGYESLLEVGNILMSRYSKCGVLEAVKSVFHQMSERNVVSWTTMISSNKDDAVSIFLNMRFDGVYPNEVTFVGLINAVKCNEQIKEGLKIHGLCIKTGFVSEPSVGNSFITLYAKFEALEDAKKAFEDITFREIISWNAMISGFAQNGFSHEALKMFLSAAAETMPNEYTFGSVLNAIAFAEDISVKQGQRCHAHLLKLGLNSCPVVSSALLDMYAKRGNIDESEKVFNEMSQKNQFVWTSIISAYSSHGDFETVMNLFHKMIKENVAPDLVTFLSVLTACNRKGMVDKGYEIFNMMIEVYNLEPSHEHYSCMVDMLGRAGRLKEAEELMSEVPGGPGESMLQSMLGSCRLHGNVKMGAKVAELAMEMKPELSGSYVQMYNIYAEKEEWDKAAEIRKAMRKKNVSKEAGFSWIDVGDTEGSLTMQGFSSGDKSHPKSDEIYRMVEIIGLEMNLEGKVAV.

The transit peptide at 1–38 (MTLLNYLHCNRSKSFLFQRFYSPYRIAHKLFDGSSQRN) directs the protein to the mitochondrion. PPR repeat units lie at residues 77–109 (DEVTLCLALKACRGDLKRGCQIHGFSTTSGFTS), 110–140 (FVCVSNAVMGMYRKAGRFDNALCIFENLVDP), 141–172 (DVVSWNTILSGFDDNQIALNFVVRMKSAGVVF), 173–207 (DAFTYSTALSFCVGSEGFLLGLQLQSTVVKTGLES), 208–238 (DLVVGNSFITMYSRSGSFRGARRVFDEMSFK), 239–274 (DMISWNSLLSGLSQEGTFGFEAVVIFRDMMREGVEL), 275–309 (DHVSFTSVITTCCHETDLKLARQIHGLCIKRGYES), 310–344 (LLEVGNILMSRYSKCGVLEAVKSVFHQMSERNVVS), 350–370 (SSNKDDAVSIFLNMRFDGVYP), 371–405 (NEVTFVGLINAVKCNEQIKEGLKIHGLCIKTGFVS), 406–436 (EPSVGNSFITLYAKFEALEDAKKAFEDITFR), 437–471 (EIISWNAMISGFAQNGFSHEALKMFLSAAAETMPN), 472–507 (EYTFGSVLNAIAFAEDISVKQGQRCHAHLLKLGLNS), 508–538 (CPVVSSALLDMYAKRGNIDESEKVFNEMSQK), 539–573 (NQFVWTSIISAYSSHGDFETVMNLFHKMIKENVAP), 574–604 (DLVTFLSVLTACNRKGMVDKGYEIFNMMIEV), and 610–640 (SHEHYSCMVDMLGRAGRLKEAEELMSEVPGG). Residues 645–720 (MLQSMLGSCR…EAGFSWIDVG (76 aa)) are type E motif. Residues 724–756 (GSLTMQGFSSGDKSHPKSDEIYRMVEIIGLEMN) are type E(+) motif.

It belongs to the PPR family. PCMP-E subfamily.

The protein resides in the mitochondrion. This chain is Pentatricopeptide repeat-containing protein At4g32430, mitochondrial (PCMP-E40), found in Arabidopsis thaliana (Mouse-ear cress).